Here is a 233-residue protein sequence, read N- to C-terminus: Ribosomal RNA small subunit methyltransferase G (233 aa).

Positions M1–T25 are disordered. S-adenosyl-L-methionine contacts are provided by G85, F90, and R155.

Belongs to the methyltransferase superfamily. RNA methyltransferase RsmG family.

Its subcellular location is the cytoplasm. It catalyses the reaction guanosine(527) in 16S rRNA + S-adenosyl-L-methionine = N(7)-methylguanosine(527) in 16S rRNA + S-adenosyl-L-homocysteine. Functionally, specifically methylates the N7 position of guanine in position 527 of 16S rRNA. This chain is Ribosomal RNA small subunit methyltransferase G, found in Rhodopseudomonas palustris (strain BisB5).